Here is a 129-residue protein sequence, read N- to C-terminus: Follitropin subunit beta (129 aa).

Positions 1–20 are cleaved as a signal peptide; it reads MKTLQFFFLFCCWKAICCNS. Disulfide bonds link cysteine 21–cysteine 69, cysteine 35–cysteine 84, cysteine 38–cysteine 122, cysteine 46–cysteine 100, cysteine 50–cysteine 102, and cysteine 105–cysteine 112. N-linked (GlcNAc...) asparagine glycosylation is found at asparagine 25 and asparagine 42.

Belongs to the glycoprotein hormones subunit beta family. In terms of assembly, heterodimer. The active follitropin is a heterodimer composed of an alpha chain/CGA shared with other hormones and a unique beta chain/FSHB shown here.

The protein localises to the secreted. In terms of biological role, together with the alpha chain CGA constitutes follitropin, the follicle-stimulating hormone, and provides its biological specificity to the hormone heterodimer. Binds FSHR, a G protein-coupled receptor, on target cells to activate downstream signaling pathways. Follitropin is involved in follicle development and spermatogenesis in reproductive organs. This is Follitropin subunit beta (FSHB) from Pan troglodytes (Chimpanzee).